The primary structure comprises 590 residues: tRNA-guanine(15) transglycosylase (590 aa).

Asp90 (nucleophile) is an active-site residue. Asp125 lines the substrate pocket. Residues Cys278, Cys280, and Cys283 each coordinate Zn(2+). Residues 502-577 (KGRVVVKGLF…HPFIIIRRHV (76 aa)) enclose the PUA domain.

The protein belongs to the archaeosine tRNA-ribosyltransferase family. Requires Zn(2+) as cofactor.

The catalysed reaction is guanosine(15) in tRNA + 7-cyano-7-deazaguanine = 7-cyano-7-carbaguanosine(15) in tRNA + guanine. Its pathway is tRNA modification; archaeosine-tRNA biosynthesis. Exchanges the guanine residue with 7-cyano-7-deazaguanine (preQ0) at position 15 in the dihydrouridine loop (D-loop) of archaeal tRNAs. This Korarchaeum cryptofilum (strain OPF8) protein is tRNA-guanine(15) transglycosylase.